Consider the following 59-residue polypeptide: Large ribosomal subunit protein uL30 (59 aa).

Belongs to the universal ribosomal protein uL30 family. Part of the 50S ribosomal subunit.

The polypeptide is Large ribosomal subunit protein uL30 (Lactococcus lactis subsp. lactis (strain IL1403) (Streptococcus lactis)).